Here is a 4226-residue protein sequence, read N- to C-terminus: Guanylate cyclase alpha (4226 aa).

Topologically, residues 1-104 are cytoplasmic; that stretch reads MSDSKKHYNE…SFIFKGLYEQ (104 aa). A helical membrane pass occupies residues 105–125; it reads FLRLPNIWFLLISLLEFIPQY. At 126 to 131 the chain is on the extracellular side; it reads QNLSNY. Residue Asn127 is glycosylated (N-linked (GlcNAc...) asparagine). The chain crosses the membrane as a helical span at residues 132–152; sequence MYYSKHSSFFLLLFFICVSII. Over 153 to 337 the chain is Cytoplasmic; that stretch reads KNIYEDSRRS…LGYVNKELNS (185 aa). The chain crosses the membrane as a helical span at residues 338–358; sequence YTIIGLIFTFICVFISVLFKW. The Extracellular segment spans residues 359 to 392; the sequence is TEDDKFRNGSHFFLITVKDNICESIVKYTLLYSN. N-linked (GlcNAc...) asparagine glycosylation occurs at Asn366. Residues 393–413 form a helical membrane-spanning segment; sequence IIPISILISVDLISILQSILI. Topologically, residues 414–2083 are cytoplasmic; that stretch reads ENDNHISTFE…FIYGSKHLYT (1670 aa). Disordered stretches follow at residues 552–572, 832–904, 968–989, and 1740–1765; these read EHSQ…NNIC, SSKN…SNND, INNN…KSSS, and NINK…NNSN. Positions 558–570 are enriched in low complexity; that stretch reads DNNNNNDNNNNNN. The segment covering 838 to 847 has biased composition (acidic residues); the sequence is TLDDPTELIS. The span at 854-873 shows a compositional bias: basic and acidic residues; the sequence is LRDKYEHTSDKKNDTNKNRD. A compositionally biased stretch (low complexity) spans 874–904; sequence GANNSNNNNNKDVSNNKNKNNNNYNYNSNND. The span at 1745 to 1754 shows a compositional bias: basic and acidic residues; sequence YKYDKNDKHN. Low complexity predominate over residues 1755–1765; sequence NNNNNNNNNSN. Residues 2084 to 2104 form a helical membrane-spanning segment; that stretch reads ISIILYWNFFKNILLILPIFF. Residues 2105–2119 are Extracellular-facing; that stretch reads YQAYASWSCVKIYPE. Residues 2120 to 2140 form a helical membrane-spanning segment; sequence LLYTFFSIFWVFIPIIYYMFL. Topologically, residues 2141–2169 are cytoplasmic; that stretch reads QHNLNYDILYNIPLFYALSRRRYNMNCFK. The chain crosses the membrane as a helical span at residues 2170–2190; sequence FLPWIFEAIFYSMIIYFFAYA. Residues 2191-2202 are Extracellular-facing; the sequence is ALKENSHLNNGE. A helical transmembrane segment spans residues 2203 to 2223; sequence VITINTFGNICFIGCLLISIL. Residues 2224–2235 are Cytoplasmic-facing; the sequence is RLFLEGSLWSPS. A helical membrane pass occupies residues 2236–2256; sequence ILITCFGCFLFVFFPSLLFIC. Residues 2257-2275 lie on the Extracellular side of the membrane; that stretch reads FAYLSNEYIREVFRQTFLW. Residues 2276–2296 traverse the membrane as a helical segment; that stretch reads APLYVLLILWFSTCIISYIFI. Over 2297–2787 the chain is Cytoplasmic; it reads NFTKSILFPN…QIHKKNKFYK (491 aa). Positions 2477–2505 are disordered; the sequence is NNDNNNDDNDNDNNNNNNNNDNYNNNDHN. Low complexity predominate over residues 2488 to 2502; it reads DNNNNNNNNDNYNNN. Residues 2788 to 2808 traverse the membrane as a helical segment; sequence TFTPWYRFIFLLLGVFFLYVW. The Extracellular segment spans residues 2809–2828; sequence KLESSLSQLWNMPSDASTDV. The helical transmembrane segment at 2829-2849 threads the bilayer; it reads FILFLSLLLELVLLAATVTTF. The Cytoplasmic portion of the chain corresponds to 2850 to 2860; the sequence is FSNIFIENFNK. The helical transmembrane segment at 2861-2881 threads the bilayer; that stretch reads IISAVVILIITYHVVSYSVTH. Residues 2882 to 2900 lie on the Extracellular side of the membrane; the sequence is IDGVFQAVLFPLYTFVILR. The helical transmembrane segment at 2901–2921 threads the bilayer; it reads LPFVNAVLCNIIFLGLFIIRF. Over 2922–2930 the chain is Cytoplasmic; it reads NGDHFLDKK. Residues 2931 to 2951 traverse the membrane as a helical segment; sequence GLAHYIPLFIGVDVFVGFVGY. Over 2952 to 3008 the chain is Extracellular; that stretch reads RLEYNQRKNFLLEYSVESSRRKQREILNTMLPPFVVDEMIYSELNEEGIPISLKAED. A helical transmembrane segment spans residues 3009–3029; that stretch reads ISTVTIIFCDIYDFQNIVASI. A Guanylate cyclase 1 domain is found at 3013-3270; sequence TIIFCDIYDF…DTVNTASRMK (258 aa). Over 3030–3738 the chain is Cytoplasmic; that stretch reads EPTRLVEVLD…SNINSIEQAL (709 aa). Disordered regions lie at residues 3077-3150 and 3201-3230; these read EDEL…FEED and DAND…NNKP. Composition is skewed to low complexity over residues 3083 to 3098 and 3108 to 3138; these read NKYS…NYYY and NNNN…NNVN. Positions 3140–3150 are enriched in acidic residues; that stretch reads SDDDGDFFEED. Residues 3201-3220 are compositionally biased toward basic and acidic residues; it reads DANDDTHNVNDSFNNDKAEN. A helical transmembrane segment spans residues 3739 to 3759; sequence IIFLVTFVMQTLISSTVSIVF. Over 3760–3773 the chain is Extracellular; the sequence is IDHKRATQTLHINY. A helical membrane pass occupies residues 3774–3794; the sequence is FAYWSVRSVYTFFGFVLWLLF. Residues 3795–3811 are Cytoplasmic-facing; it reads HYRTRPEVSSLLNIKWM. A helical membrane pass occupies residues 3812–3832; that stretch reads IFFLNLLFISAACVFSIAYLW. Over 3833–3840 the chain is Extracellular; the sequence is AISETDQT. Residues 3841–3861 traverse the membrane as a helical segment; that stretch reads TSYTIWMTNDTIEFFFYLVIL. Topologically, residues 3862-3871 are cytoplasmic; sequence HHNTGMLFQT. The chain crosses the membrane as a helical span at residues 3872–3892; the sequence is CILVDLLFITMSLTFIATSVV. Position 3893 (Lys3893) is a topological domain, extracellular. The helical transmembrane segment at 3894-3914 threads the bilayer; that stretch reads TITTDSTVLLIPWYVAFNLIS. Topologically, residues 3915-4226 are cytoplasmic; that stretch reads TYCKESIDRR…INVNDRQSNL (312 aa). The 135-residue stretch at 3970-4104 folds into the Guanylate cyclase 2 domain; it reads TFLFADICGF…IDVLTGNLME (135 aa). Asp3975, Ile3976, and Asp4019 together coordinate Mg(2+).

It in the N-terminal section; belongs to the cation transport ATPase (P-type) (TC 3.A.3) family. Type IV subfamily. The protein in the C-terminal section; belongs to the adenylyl cyclase class-4/guanylyl cyclase family. The cofactor is Mg(2+). Mn(2+) serves as cofactor.

Its subcellular location is the cell membrane. It is found in the cytoplasmic vesicle membrane. It catalyses the reaction GTP = 3',5'-cyclic GMP + diphosphate. In terms of biological role, catalyzes the synthesis of the second messenger cGMP from GTP. In asexual blood stage schizonts, required for cGMP production which is essential for PKG activation, PKG-dependent Ca(2+) release, and ultimately merozoite egress from host erythrocytes. The protein is Guanylate cyclase alpha of Plasmodium falciparum (isolate 3D7).